Consider the following 171-residue polypeptide: S-ribosylhomocysteine lyase (171 aa).

Positions 54, 58, and 128 each coordinate Fe cation.

Belongs to the LuxS family. Homodimer. Requires Fe cation as cofactor.

It catalyses the reaction S-(5-deoxy-D-ribos-5-yl)-L-homocysteine = (S)-4,5-dihydroxypentane-2,3-dione + L-homocysteine. Involved in the synthesis of autoinducer 2 (AI-2) which is secreted by bacteria and is used to communicate both the cell density and the metabolic potential of the environment. The regulation of gene expression in response to changes in cell density is called quorum sensing. Catalyzes the transformation of S-ribosylhomocysteine (RHC) to homocysteine (HC) and 4,5-dihydroxy-2,3-pentadione (DPD). The polypeptide is S-ribosylhomocysteine lyase (Shigella flexneri).